A 145-amino-acid polypeptide reads, in one-letter code: Protein SprT-like (145 aa).

The region spanning 4 to 140 (TNYVQEVSLA…VCGNCHGKLM (137 aa)) is the SprT-like domain. Position 64 (H64) interacts with Zn(2+). The active site involves E65. Residue H68 participates in Zn(2+) binding.

Belongs to the SprT family. The cofactor is Zn(2+).

The protein localises to the cytoplasm. This is Protein SprT-like from Streptococcus pyogenes serotype M3 (strain SSI-1).